The sequence spans 489 residues: Glutamate--tRNA ligase (489 aa).

Residues 11–21 (PSPTGHLHIGN) carry the 'HIGH' region motif. Residues 252–256 (KLSKR) carry the 'KMSKS' region motif. K255 provides a ligand contact to ATP.

It belongs to the class-I aminoacyl-tRNA synthetase family. Glutamate--tRNA ligase type 1 subfamily. In terms of assembly, monomer.

It is found in the cytoplasm. The catalysed reaction is tRNA(Glu) + L-glutamate + ATP = L-glutamyl-tRNA(Glu) + AMP + diphosphate. Functionally, catalyzes the attachment of glutamate to tRNA(Glu) in a two-step reaction: glutamate is first activated by ATP to form Glu-AMP and then transferred to the acceptor end of tRNA(Glu). The polypeptide is Glutamate--tRNA ligase (Oceanobacillus iheyensis (strain DSM 14371 / CIP 107618 / JCM 11309 / KCTC 3954 / HTE831)).